The primary structure comprises 776 residues: Probable inorganic carbon transporter subunit DabA (776 aa).

Zn(2+) is bound by residues Cys313, Asp315, His473, and Cys488.

Belongs to the inorganic carbon transporter (TC 9.A.2) DabA family. In terms of assembly, forms a complex with DabB. Requires Zn(2+) as cofactor.

The protein localises to the cell inner membrane. Its function is as follows. Part of an energy-coupled inorganic carbon pump. This is Probable inorganic carbon transporter subunit DabA from Chromobacterium violaceum (strain ATCC 12472 / DSM 30191 / JCM 1249 / CCUG 213 / NBRC 12614 / NCIMB 9131 / NCTC 9757 / MK).